Consider the following 436-residue polypeptide: MTNNTMLISLSTQPADARWGEKATLSVNEQGFTIHVGTTSLNGKAALATIQRAARKIDGQGIKHVTLAGEGWDLANSWAFWQGYRGPKGQRTVEWAELNDADKKELNDRLKIVDWVRDTINLPAEDLGPEQLATRAVDLLCDVACDAVNYRITKGEDLREQNYAGLYTVGRGSERQPVLLALDYNPTGNPDAPVFACLVGKGITFDTGGYSLKPSGSMDSMKSDMGGAATLTGALALAASRGLQQRVKLYLCCADNMVSGNAFRLGDIIRYRNGKTVEVMNTDAEGRLVLADGLIDASEQNPQWIIDCATLTGAAKMALGNDYHALFSFDDELVAALQESAKEENEPFWRLPLEEFHRSHLPSSFADLNNIASGAHTAGASTAAAFLSHFVKNYQQGWLHIDCSATYRKGAVDQWATGATGLGVRTLANLLLSNAK.

Residues Lys-201 and Asp-206 each contribute to the Mn(2+) site. Lys-213 is a catalytic residue. 3 residues coordinate Mn(2+): Asp-224, Asp-283, and Glu-285. Arg-287 is an active-site residue.

The protein belongs to the peptidase M17 family. In terms of assembly, homohexamer. It depends on Mn(2+) as a cofactor.

It localises to the cytoplasm. The enzyme catalyses Release of an N-terminal amino acid, Xaa, from a peptide or arylamide. Xaa is preferably Glu or Asp but may be other amino acids, including Leu, Met, His, Cys and Gln.. Its function is as follows. Probably plays an important role in intracellular peptide degradation. In Pectobacterium atrosepticum (strain SCRI 1043 / ATCC BAA-672) (Erwinia carotovora subsp. atroseptica), this protein is Peptidase B.